The chain runs to 964 residues: SKI family transcriptional corepressor 1 (964 aa).

Disordered stretches follow at residues 45-72, 278-365, 414-461, 525-587, 610-768, and 794-842; these read TQLG…SSAL, RTFS…GGSA, AGEP…WGHQ, AGGG…RKSS, REAY…GAAK, and LCTP…EDGL. Over residues 283-310 the composition is skewed to gly residues; sequence QGGGGGGANSGSGGAGKGGAGGGGGPGC. Residues 345–355 show a composition bias toward low complexity; it reads ALGLAAAASGP. Composition is skewed to gly residues over residues 356 to 365 and 417 to 440; these read AGPGGPGGSA and PKGG…GPGA. The segment covering 571 to 583 has biased composition (pro residues); it reads SLGPLPPPPPPPA. The span at 652–661 shows a compositional bias: acidic residues; that stretch reads DTADEPEVDV. Residues 798 to 808 are compositionally biased toward basic and acidic residues; that stretch reads ETHEPDKEDNH. The span at 823–834 shows a compositional bias: polar residues; it reads DQRSVSQPSPAN. Residues 853–921 adopt a coiled-coil conformation; sequence EKDIENLARE…DTLCNELDQE (69 aa).

The protein belongs to the SKI family. In terms of assembly, interacts with SMAD1, SMAD2 and SMAD3. Interacts with LBX1. Expressed in brain with higher levels in embryo than adult. Expressed by migratory precursors of Purkinje cells in the postnatal brain. Also expressed in adult testis.

The protein localises to the nucleus. Its function is as follows. Inhibits BMP signaling. Acts as a transcriptional corepressor of LBX1. The polypeptide is SKI family transcriptional corepressor 1 (Skor1) (Mus musculus (Mouse)).